Reading from the N-terminus, the 176-residue chain is Ribosome rescue factor SmrB (176 aa).

One can recognise a Smr domain in the interval 97–172; that stretch reads LDMHGMTQQE…GDGALLVLLS (76 aa).

This sequence belongs to the SmrB family. In terms of assembly, associates with collided ribosomes, but not with correctly translating polysomes.

In terms of biological role, acts as a ribosome collision sensor. Detects stalled/collided disomes (pairs of ribosomes where the leading ribosome is stalled and a second ribosome has collided with it) and endonucleolytically cleaves mRNA at the 5' boundary of the stalled ribosome. Stalled/collided disomes form a new interface (primarily via the 30S subunits) that binds SmrB. Cleaved mRNA becomes available for tmRNA ligation, leading to ribosomal subunit dissociation and rescue of stalled ribosomes. The chain is Ribosome rescue factor SmrB from Vibrio vulnificus (strain YJ016).